We begin with the raw amino-acid sequence, 123 residues long: Basic myotoxic phospholipase A2 PhTX-II (123 aa).

Intrachain disulfides connect cysteine 26/cysteine 116, cysteine 28/cysteine 45, cysteine 44/cysteine 95, cysteine 50/cysteine 123, cysteine 51/cysteine 88, cysteine 58/cysteine 81, and cysteine 75/cysteine 86. Positions 27, 29, and 31 each coordinate Ca(2+). The active site involves histidine 48. Position 49 (aspartate 49) interacts with Ca(2+). Aspartate 89 is a catalytic residue.

Monomer. Ca(2+) is required as a cofactor. Expressed by the venom gland.

It localises to the secreted. The catalysed reaction is a 1,2-diacyl-sn-glycero-3-phosphocholine + H2O = a 1-acyl-sn-glycero-3-phosphocholine + a fatty acid + H(+). P-bromophenacyl bromide (BPB) completely inhibits the catalytic and edematogenic activities. Enzymatic activity is also diminished by EDTA, heparin and crotapotins F2 and F3 from C.d.collilineatus. Inhibited by divalent cations different from calcium ions (cadmium, magnesium, manganese, zinc), since they act as competitive antagonists of this cofactor. Its function is as follows. Snake venom phospholipase A2 (PLA2) that induces myotoxicity and local edema in mice. In addition, it causes neuromuscular blockade in avian neuromuscular preparations with a significant direct action on skeletal muscle function. Myotoxic action is exerted by both enzymatic and non-enzymatic mechanisms. PLA2 catalyzes the calcium-dependent hydrolysis of the 2-acyl groups in 3-sn-phosphoglycerides. This Bothrocophias hyoprora (Amazonian hognose viper) protein is Basic myotoxic phospholipase A2 PhTX-II.